We begin with the raw amino-acid sequence, 291 residues long: Bis(5'-nucleosyl)-tetraphosphatase, symmetrical (291 aa).

Belongs to the Ap4A hydrolase family.

The enzyme catalyses P(1),P(4)-bis(5'-adenosyl) tetraphosphate + H2O = 2 ADP + 2 H(+). Functionally, hydrolyzes diadenosine 5',5'''-P1,P4-tetraphosphate to yield ADP. This chain is Bis(5'-nucleosyl)-tetraphosphatase, symmetrical, found in Coxiella burnetii (strain CbuK_Q154) (Coxiella burnetii (strain Q154)).